Reading from the N-terminus, the 203-residue chain is Glutathione S-transferase 2 (203 aa).

The region spanning 1–78 (MPKVVFHYFG…YLGRKYGLAG (78 aa)) is the GST N-terminal domain. Residues Tyr8, Trp38, Lys42, 48 to 50 (GQM), and 62 to 63 (QS) contribute to the glutathione site. The GST C-terminal domain occupies 80–203 (DIEEDFEIDQ…YLDSAPKKEF (124 aa)).

This sequence belongs to the GST superfamily. Sigma family. Homodimer.

The catalysed reaction is RX + glutathione = an S-substituted glutathione + a halide anion + H(+). In terms of biological role, conjugation of reduced glutathione to a wide number of exogenous and endogenous hydrophobic electrophiles. This Manduca sexta (Tobacco hawkmoth) protein is Glutathione S-transferase 2 (GST2).